The chain runs to 156 residues: Eosinophil cationic protein 2 (156 aa).

A signal peptide spans 1–25 (MGPKLLESRLCLLLLLGLVLMLASC). The active-site Proton acceptor is His38. 4 disulfides stabilise this stretch: Cys47-Cys106, Cys61-Cys119, Cys79-Cys134, and Cys86-Cys94. Position 62–66 (62–66 (KGLNT)) interacts with substrate. Residues Asn89, Asn96, and Asn107 are each glycosylated (N-linked (GlcNAc...) asparagine). His151 (proton donor) is an active-site residue.

Belongs to the pancreatic ribonuclease family.

The protein localises to the cytoplasmic granule. In terms of biological role, cytotoxin and helminthotoxin with ribonuclease activity. Selectively chemotactic for dendritic cells. Possesses a wide variety of biological activities. The sequence is that of Eosinophil cationic protein 2 (Ear2) from Mus musculus (Mouse).